Consider the following 124-residue polypeptide: MIVGIGIDITEIDRIAKGWGRFGDRFARRILHPHEVVRMPAANPVAFLAGRFAVKEAAVKALGTGFSDGIGPRDIEVGVAPAGAPQLVLHGKAAARMEALGATRTHVSLTHGRDTAAAVVILES.

Mg(2+)-binding residues include D8 and E56.

This sequence belongs to the P-Pant transferase superfamily. AcpS family. The cofactor is Mg(2+).

It localises to the cytoplasm. The enzyme catalyses apo-[ACP] + CoA = holo-[ACP] + adenosine 3',5'-bisphosphate + H(+). In terms of biological role, transfers the 4'-phosphopantetheine moiety from coenzyme A to a Ser of acyl-carrier-protein. The chain is Holo-[acyl-carrier-protein] synthase from Nitratidesulfovibrio vulgaris (strain DP4) (Desulfovibrio vulgaris).